Consider the following 300-residue polypeptide: Actin-related protein 2/3 complex subunit 2-B (300 aa).

The protein belongs to the ARPC2 family. In terms of assembly, component of the Arp2/3 complex composed of actr2/arp2, actr3/arp3, arpc1 (arpc1a or arpc1b), arpc2, arpc3, arpc4 and arpc5.

Its subcellular location is the cytoplasm. It is found in the cytoskeleton. It localises to the cell projection. The protein resides in the nucleus. Functionally, actin-binding component of the Arp2/3 complex, a multiprotein complex that mediates actin polymerization upon stimulation by nucleation-promoting factor (NPF). The Arp2/3 complex mediates the formation of branched actin networks in the cytoplasm, providing the force for cell motility. In addition to its role in the cytoplasmic cytoskeleton, the Arp2/3 complex also promotes actin polymerization in the nucleus, thereby regulating gene transcription and repair of damaged DNA. The Arp2/3 complex promotes homologous recombination (HR) repair in response to DNA damage by promoting nuclear actin polymerization, leading to drive motility of double-strand breaks (DSBs). The chain is Actin-related protein 2/3 complex subunit 2-B (arpc2-b) from Xenopus laevis (African clawed frog).